A 514-amino-acid chain; its full sequence is Protein Tube (514 aa).

Disordered stretches follow at residues 226–250, 255–274, 324–343, 366–385, and 413–514; these read VPQQ…RSSR, TASN…SNTA, LDAG…STST, ASDA…VPDM, and NGAK…ELQQ. Over residues 259 to 274 the composition is skewed to low complexity; the sequence is VAPTTASNAPSASNTA. Over residues 422–433 the composition is skewed to polar residues; sequence ADNNSSGTNSLS. Residues 434-460 are compositionally biased toward acidic residues; sequence NDDDEQKEDDDDDDDDDVVDVDDEEAD. Positions 477–514 are enriched in polar residues; that stretch reads TTVTCTSGENSFEFTNDSSSASNDDYTNNIPNLSELQQ.

As to expression, maternal and zygotic gene product.

The protein resides in the cytoplasm. In terms of biological role, required for the determination of embryonic dorsoventral polarity. Is involved in transduction of information regulating nuclear import of dorsal protein. The chain is Protein Tube (tub) from Drosophila virilis (Fruit fly).